We begin with the raw amino-acid sequence, 201 residues long: Myelomonocytic growth factor (201 aa).

The signal sequence occupies residues 1–23; it reads MCCLTPVLALALVLGAPWQALHG. 2 disulfide bridges follow: cysteine 61-cysteine 67 and cysteine 89-cysteine 99. 2 N-linked (GlcNAc...) asparagine glycosylation sites follow: asparagine 123 and asparagine 137.

It belongs to the IL-6 superfamily.

Its subcellular location is the secreted. Hematopoietic growth factor that stimulates the proliferation and colony formation of normal and transformed avian cells of the myeloid lineage. This is Myelomonocytic growth factor from Gallus gallus (Chicken).